The primary structure comprises 369 residues: RING-H2 finger protein ATL47 (369 aa).

The chain crosses the membrane as a helical span at residues 52-72; that stretch reads IILFIIVLLSVIFFICSILHL. Residues 144–186 form an RING-type; atypical zinc finger; sequence CAVCLCEFSEDDKLRLLPNCSHAFHIDCIDTWLLSNSTCPLCR. The disordered stretch occupies residues 332–355; that stretch reads NNHPSETNLVVGGSSSSSSYVCSG. A compositionally biased stretch (low complexity) spans 341–355; it reads VVGGSSSSSSYVCSG.

The protein belongs to the RING-type zinc finger family. ATL subfamily.

Its subcellular location is the membrane. The enzyme catalyses S-ubiquitinyl-[E2 ubiquitin-conjugating enzyme]-L-cysteine + [acceptor protein]-L-lysine = [E2 ubiquitin-conjugating enzyme]-L-cysteine + N(6)-ubiquitinyl-[acceptor protein]-L-lysine.. Its pathway is protein modification; protein ubiquitination. In Arabidopsis thaliana (Mouse-ear cress), this protein is RING-H2 finger protein ATL47 (ATL47).